The chain runs to 348 residues: Heat-inducible transcription repressor HrcA (348 aa).

The protein belongs to the HrcA family.

Functionally, negative regulator of class I heat shock genes (grpE-dnaK-dnaJ and groELS operons). Prevents heat-shock induction of these operons. The protein is Heat-inducible transcription repressor HrcA of Thermodesulfovibrio yellowstonii (strain ATCC 51303 / DSM 11347 / YP87).